We begin with the raw amino-acid sequence, 306 residues long: Lymphotoxin-beta (306 aa).

Residues 1-27 (MGTRGLQGLGGRPQGRGCLLLAVAGAT) are Cytoplasmic-facing. Residues 28 to 48 (SLVTLLLAVPITVLAVLALVP) traverse the membrane as a helical; Signal-anchor for type II membrane protein segment. The Extracellular segment spans residues 49 to 306 (QDQGRRVEKI…KTFFGAVMVG (258 aa)). 2 disordered regions span residues 63–112 (AQAQ…GPVA) and 127–151 (PAAD…DLNP). The span at 74 to 85 (PSCILPSPSSLS) shows a compositional bias: low complexity. Residues 95–112 (QRSNASRNLASTSQGPVA) are compositionally biased toward polar residues. An N-linked (GlcNAc...) asparagine glycan is attached at asparagine 98. The THD domain occupies 154–305 (PAAHLIGAWM…GKTFFGAVMV (152 aa)). A glycan (N-linked (GlcNAc...) asparagine) is linked at asparagine 284.

It belongs to the tumor necrosis factor family. As to quaternary structure, heterotrimer of either two LTB and one LTA subunits or (less prevalent) two LTA and one LTB subunits.

The protein localises to the membrane. Cytokine that binds to LTBR/TNFRSF3. May play a specific role in immune response regulation. Provides the membrane anchor for the attachment of the heterotrimeric complex to the cell surface. This is Lymphotoxin-beta (Ltb) from Mus musculus (Mouse).